Reading from the N-terminus, the 58-residue chain is Photosystem II reaction center protein K (58 aa).

The propeptide occupies 1–21; sequence MLVISNVYPSNLFTLINPFFA. A helical transmembrane segment spans residues 29-49; sequence IFDPIVDVMPIIPVFFFLLAF.

Belongs to the PsbK family. As to quaternary structure, PSII is composed of 1 copy each of membrane proteins PsbA, PsbB, PsbC, PsbD, PsbE, PsbF, PsbH, PsbI, PsbJ, PsbK, PsbL, PsbM, PsbT, PsbX, PsbY, PsbZ, Psb30/Ycf12, at least 3 peripheral proteins of the oxygen-evolving complex and a large number of cofactors. It forms dimeric complexes.

The protein localises to the plastid. The protein resides in the chloroplast thylakoid membrane. In terms of biological role, one of the components of the core complex of photosystem II (PSII). PSII is a light-driven water:plastoquinone oxidoreductase that uses light energy to abstract electrons from H(2)O, generating O(2) and a proton gradient subsequently used for ATP formation. It consists of a core antenna complex that captures photons, and an electron transfer chain that converts photonic excitation into a charge separation. The polypeptide is Photosystem II reaction center protein K (Psilotum nudum (Whisk fern)).